A 354-amino-acid polypeptide reads, in one-letter code: Uroporphyrinogen decarboxylase (354 aa).

Residues 27–31 (RQAGR), Asp-77, Tyr-154, Thr-209, and His-327 contribute to the substrate site.

Belongs to the uroporphyrinogen decarboxylase family. As to quaternary structure, homodimer.

The protein resides in the cytoplasm. The catalysed reaction is uroporphyrinogen III + 4 H(+) = coproporphyrinogen III + 4 CO2. Its pathway is porphyrin-containing compound metabolism; protoporphyrin-IX biosynthesis; coproporphyrinogen-III from 5-aminolevulinate: step 4/4. In terms of biological role, catalyzes the decarboxylation of four acetate groups of uroporphyrinogen-III to yield coproporphyrinogen-III. In Pseudomonas entomophila (strain L48), this protein is Uroporphyrinogen decarboxylase.